The primary structure comprises 57 residues: Large ribosomal subunit protein bL32 (57 aa).

This sequence belongs to the bacterial ribosomal protein bL32 family.

This chain is Large ribosomal subunit protein bL32, found in Mycolicibacterium gilvum (strain PYR-GCK) (Mycobacterium gilvum (strain PYR-GCK)).